Here is a 1500-residue protein sequence, read N- to C-terminus: Host cell factor (1500 aa).

Kelch repeat units follow at residues L85 to T133, M135 to H181, K189 to D237, N259 to N307, and K308 to S373. Residue S477 is modified to Phosphoserine. A compositionally biased stretch (polar residues) spans L517–A528. The interval L517–T543 is disordered. 2 positions are modified to phosphoserine: S958 and S966. The segment at S1024–Q1061 is disordered. Residues N1036–A1047 show a composition bias toward low complexity. T1126 is subject to Phosphothreonine. The disordered stretch occupies residues I1161 to N1185. Over residues E1166–Q1178 the composition is skewed to basic and acidic residues. Fibronectin type-III domains lie at V1244–P1341 and A1346–A1457. A disordered region spans residues A1458–D1500. Residues K1470–R1495 carry the Bipartite nuclear localization signal motif. Over residues T1477–C1488 the composition is skewed to polar residues. The residue at position 1489 (S1489) is a Phosphoserine. Residues P1490–D1500 show a composition bias toward basic residues.

In terms of assembly, core component of several methyltransferase-containing complexes. Component of the SET1 complex, composed at least of the catalytic subunit Set1, wds/WDR5, Wdr82, Rbbp5, ash2, Cfp1/CXXC1, hcf and Dpy-30L1. Component of the MLL3/4 complex composed at least of the catalytic subunit trr, ash2, Rbbp5, Dpy-30L1, wds, hcf, ptip, Pa1, Utx, Lpt and Ncoa6. Component of the Ada2a-containing (ATAC) complex composed of at least Ada2a, Atac1, Hcf, Ada3, Gcn5, Mocs2B, Charac-14, Atac3, Atac2, NC2beta and wds. In terms of processing, proteolytic cleavage occurs between amino acids 900 and 1100 within the non-conserved central region, giving rise to two independent but tightly associated N- and C-terminal subunits.

Its subcellular location is the nucleus. Its function is as follows. May be involved in control of the cell cycle. The chain is Host cell factor from Drosophila melanogaster (Fruit fly).